The chain runs to 91 residues: Elongation factor 1-beta (91 aa).

It belongs to the EF-1-beta/EF-1-delta family.

Functionally, promotes the exchange of GDP for GTP in EF-1-alpha/GDP, thus allowing the regeneration of EF-1-alpha/GTP that could then be used to form the ternary complex EF-1-alpha/GTP/AAtRNA. The protein is Elongation factor 1-beta of Thermococcus gammatolerans (strain DSM 15229 / JCM 11827 / EJ3).